The primary structure comprises 150 residues: Ribonuclease K6 (150 aa).

A signal peptide spans 1 to 23 (MVLCFPLLLLLLVLWGPVCPLHA). His38 serves as the catalytic Proton acceptor. Cystine bridges form between Cys46–Cys104, Cys60–Cys114, Cys78–Cys129, and Cys85–Cys92. Substrate-binding positions include 61–65 (KHQNT) and Lys86. Asn100 is a glycosylation site (N-linked (GlcNAc...) asparagine). Arg105 is a substrate binding site. His145 acts as the Proton donor in catalysis.

This sequence belongs to the pancreatic ribonuclease family. As to quaternary structure, interacts (via N-terminus) with bacterial lipopolysaccharide (LPS).

It localises to the secreted. Its subcellular location is the lysosome. It is found in the cytoplasmic granule. Its function is as follows. Ribonuclease which shows a preference for the pyrimidines uridine and cytosine. Has potent antibacterial activity against a range of Gram-positive and Gram-negative bacteria, including P.aeruginosa, A.baumanii, M.luteus, S.aureus, E.faecalis, E.faecium, S.saprophyticus and E.coli. Causes loss of bacterial membrane integrity, and also promotes agglutination of Gram-negative bacteria. Probably contributes to urinary tract sterility. Bactericidal activity is independent of RNase activity. In Pan troglodytes (Chimpanzee), this protein is Ribonuclease K6 (RNASE6).